Consider the following 136-residue polypeptide: Large ribosomal subunit protein uL16 (136 aa).

This sequence belongs to the universal ribosomal protein uL16 family. As to quaternary structure, part of the 50S ribosomal subunit.

Its function is as follows. Binds 23S rRNA and is also seen to make contacts with the A and possibly P site tRNAs. This is Large ribosomal subunit protein uL16 from Rickettsia peacockii (strain Rustic).